A 312-amino-acid chain; its full sequence is Homoserine O-acetyltransferase (312 aa).

The active-site Acyl-thioester intermediate is the Cys-142. 2 residues coordinate substrate: Lys-163 and Ser-192. The active-site Proton acceptor is the His-235. Glu-237 is a catalytic residue. Substrate is bound at residue Arg-249.

The protein belongs to the MetA family.

The protein localises to the cytoplasm. It catalyses the reaction L-homoserine + acetyl-CoA = O-acetyl-L-homoserine + CoA. Its pathway is amino-acid biosynthesis; L-methionine biosynthesis via de novo pathway; O-acetyl-L-homoserine from L-homoserine: step 1/1. Its function is as follows. Transfers an acetyl group from acetyl-CoA to L-homoserine, forming acetyl-L-homoserine. This chain is Homoserine O-acetyltransferase, found in Ruegeria sp. (strain TM1040) (Silicibacter sp.).